The sequence spans 103 residues: Pyrimidine/purine nucleoside phosphorylase (103 aa).

It belongs to the nucleoside phosphorylase PpnP family.

The enzyme catalyses a purine D-ribonucleoside + phosphate = a purine nucleobase + alpha-D-ribose 1-phosphate. It carries out the reaction adenosine + phosphate = alpha-D-ribose 1-phosphate + adenine. The catalysed reaction is cytidine + phosphate = cytosine + alpha-D-ribose 1-phosphate. It catalyses the reaction guanosine + phosphate = alpha-D-ribose 1-phosphate + guanine. The enzyme catalyses inosine + phosphate = alpha-D-ribose 1-phosphate + hypoxanthine. It carries out the reaction thymidine + phosphate = 2-deoxy-alpha-D-ribose 1-phosphate + thymine. The catalysed reaction is uridine + phosphate = alpha-D-ribose 1-phosphate + uracil. It catalyses the reaction xanthosine + phosphate = alpha-D-ribose 1-phosphate + xanthine. Functionally, catalyzes the phosphorolysis of diverse nucleosides, yielding D-ribose 1-phosphate and the respective free bases. Can use uridine, adenosine, guanosine, cytidine, thymidine, inosine and xanthosine as substrates. Also catalyzes the reverse reactions. In Shewanella sp. (strain MR-4), this protein is Pyrimidine/purine nucleoside phosphorylase.